The chain runs to 194 residues: Large ribosomal subunit protein bL9 (194 aa).

A compositionally biased stretch (basic and acidic residues) spans 156–167 (RGEDISSRREDQ). Residues 156–194 (RGEDISSRREDQDAAAEAIAAAGEFFDPDAQQDEEPEQQ) are disordered. Residues 181–194 (FDPDAQQDEEPEQQ) show a composition bias toward acidic residues.

Belongs to the bacterial ribosomal protein bL9 family.

Binds to the 23S rRNA. The protein is Large ribosomal subunit protein bL9 of Rhodopseudomonas palustris (strain BisB5).